The chain runs to 306 residues: ORF-B protein (306 aa).

3 helical membrane-spanning segments follow: residues 92–112 (MIQWDYVFYLLPRVWIMFPFI), 120–140 (LTHLLTLTTSVLSATSLVFGW), and 161–181 (VIEWLAQFSFLFTHVTLIVVS).

In terms of assembly, interacts with host RACK1.

Its subcellular location is the host cytoplasm. It localises to the host cell membrane. The protein is ORF-B protein of Sander vitreus (Walleye).